The sequence spans 344 residues: Tetraacyldisaccharide 4'-kinase (344 aa).

68–75 (TAGGNGKT) contributes to the ATP binding site.

Belongs to the LpxK family.

It carries out the reaction a lipid A disaccharide + ATP = a lipid IVA + ADP + H(+). It participates in glycolipid biosynthesis; lipid IV(A) biosynthesis; lipid IV(A) from (3R)-3-hydroxytetradecanoyl-[acyl-carrier-protein] and UDP-N-acetyl-alpha-D-glucosamine: step 6/6. Its function is as follows. Transfers the gamma-phosphate of ATP to the 4'-position of a tetraacyldisaccharide 1-phosphate intermediate (termed DS-1-P) to form tetraacyldisaccharide 1,4'-bis-phosphate (lipid IVA). The chain is Tetraacyldisaccharide 4'-kinase from Photobacterium profundum (strain SS9).